Consider the following 296-residue polypeptide: D-alanine--D-alanine ligase (296 aa).

The region spanning 103-293 (KEILMHHRMP…FDSFVKRIIE (191 aa)) is the ATP-grasp domain. 129 to 180 (ISFPVAVKPSSGGSSIATFKVKSIQELKHAYEEASKYGEVMIEQWVTGKEIT) provides a ligand contact to ATP. Residues aspartate 247, glutamate 260, and asparagine 262 each contribute to the Mg(2+) site.

It belongs to the D-alanine--D-alanine ligase family. It depends on Mg(2+) as a cofactor. The cofactor is Mn(2+).

It localises to the cytoplasm. It carries out the reaction 2 D-alanine + ATP = D-alanyl-D-alanine + ADP + phosphate + H(+). Its pathway is cell wall biogenesis; peptidoglycan biosynthesis. Its function is as follows. Cell wall formation. This is D-alanine--D-alanine ligase from Francisella tularensis subsp. tularensis (strain FSC 198).